Consider the following 467-residue polypeptide: Serine/threonine-protein phosphatase 2A 56 kDa regulatory subunit epsilon isoform (467 aa).

A disordered region spans residues 1-39; the sequence is MSSAPTTPPSVDKVDGFSRKSVRKARQKRSQSSSQFRSQ. S2 is modified (N-acetylserine). Residue T7 is modified to Phosphothreonine. The segment covering 20–29 has biased composition (basic residues); the sequence is KSVRKARQKR. S30, S32, and S34 each carry phosphoserine. Positions 30–39 are enriched in low complexity; it reads SQSSSQFRSQ.

It belongs to the phosphatase 2A regulatory subunit B56 family. As to quaternary structure, PP2A consists of a common heterodimeric core enzyme, composed of a 36 kDa catalytic subunit (subunit C) and a 65 kDa constant regulatory subunit (PR65 or subunit A), that associates with a variety of regulatory subunits. Proteins that associate with the core dimer include three families of regulatory subunits B (the R2/B/PR55/B55, R3/B''/PR72/PR130/PR59 and R5/B'/B56 families), the 48 kDa variable regulatory subunit, viral proteins, and cell signaling molecules. Interacts with SGO1. Found in a complex with at least ARL2, PPP2CB; PPP2R1A, PPP2R2A, PPP2R5E and TBCD.

It is found in the cytoplasm. The B regulatory subunit might modulate substrate selectivity and catalytic activity, and might also direct the localization of the catalytic enzyme to a particular subcellular compartment. Interacts with cyclin G in vitro. In Mus musculus (Mouse), this protein is Serine/threonine-protein phosphatase 2A 56 kDa regulatory subunit epsilon isoform (Ppp2r5e).